The chain runs to 179 residues: Large ribosomal subunit protein uL5 (179 aa).

The protein belongs to the universal ribosomal protein uL5 family. As to quaternary structure, part of the 50S ribosomal subunit; part of the 5S rRNA/L5/L18/L25 subcomplex. Contacts the 5S rRNA and the P site tRNA. Forms a bridge to the 30S subunit in the 70S ribosome.

In terms of biological role, this is one of the proteins that bind and probably mediate the attachment of the 5S RNA into the large ribosomal subunit, where it forms part of the central protuberance. In the 70S ribosome it contacts protein S13 of the 30S subunit (bridge B1b), connecting the 2 subunits; this bridge is implicated in subunit movement. Contacts the P site tRNA; the 5S rRNA and some of its associated proteins might help stabilize positioning of ribosome-bound tRNAs. The polypeptide is Large ribosomal subunit protein uL5 (Clostridium botulinum (strain Alaska E43 / Type E3)).